Consider the following 131-residue polypeptide: Conotoxin Cal8.2 (131 aa).

A signal peptide spans 1 to 19 (MKLLLTLLLGSALMCITLA). A propeptide spanning residues 20-38 (DECGLGTHRPVKEVIDNVR) is cleaved from the precursor.

Post-translationally, contains 4 disulfide bonds. As to expression, expressed by the venom duct.

It localises to the secreted. Its function is as follows. Probable neurotoxin with unknown target. Possibly targets ion channels. The protein is Conotoxin Cal8.2 of Californiconus californicus (California cone).